A 355-amino-acid polypeptide reads, in one-letter code: Uroporphyrinogen decarboxylase (355 aa).

Substrate-binding positions include 27-31, D78, Y155, T210, and H328; that span reads RQAGR.

Belongs to the uroporphyrinogen decarboxylase family. As to quaternary structure, homodimer.

Its subcellular location is the cytoplasm. It catalyses the reaction uroporphyrinogen III + 4 H(+) = coproporphyrinogen III + 4 CO2. Its pathway is porphyrin-containing compound metabolism; protoporphyrin-IX biosynthesis; coproporphyrinogen-III from 5-aminolevulinate: step 4/4. In terms of biological role, catalyzes the decarboxylation of four acetate groups of uroporphyrinogen-III to yield coproporphyrinogen-III. This chain is Uroporphyrinogen decarboxylase, found in Pseudomonas fluorescens (strain Pf0-1).